A 167-amino-acid chain; its full sequence is Cytochrome c-type biogenesis protein CcmE (167 aa).

Over 1 to 7 (MTRKTRR) the chain is Cytoplasmic. A helical; Signal-anchor for type II membrane protein membrane pass occupies residues 8-28 (LWIVIACLACVGSAAALTLRA). Over 29 to 167 (FSSNIVFFMA…DTMTAKKAGG (139 aa)) the chain is Periplasmic. Heme-binding residues include histidine 125 and tyrosine 129. Basic and acidic residues predominate over residues 141 to 150 (TGKWDPRFGK). Residues 141-167 (TGKWDPRFGKAPDASSWDTMTAKKAGG) form a disordered region.

It belongs to the CcmE/CycJ family.

It localises to the cell inner membrane. Heme chaperone required for the biogenesis of c-type cytochromes. Transiently binds heme delivered by CcmC and transfers the heme to apo-cytochromes in a process facilitated by CcmF and CcmH. In Gluconobacter oxydans (strain 621H) (Gluconobacter suboxydans), this protein is Cytochrome c-type biogenesis protein CcmE.